The chain runs to 202 residues: Regulator of G-protein signaling 16 (202 aa).

2 S-palmitoyl cysteine lipidation sites follow: Cys2 and Cys12. The region spanning 65–181 is the RGS domain; that stretch reads SFDLLLSSKN…LKSPAYRDLA (117 aa). Residue Tyr168 is modified to Phosphotyrosine; by EGFR. Phosphotyrosine is present on Tyr177.

As to quaternary structure, interacts with GNAI1 and GNAQ. Interacts with GNAI2, GNAI3 and GNAO1. Post-translationally, palmitoylated on Cys-2 and/or Cys-12. In terms of processing, phosphorylated. Phosphorylation at Tyr-168 by EGFR enhances GTPase accelerating (GAP) activity toward GNAI1. As to expression, abundantly expressed in retina with lower levels of expression in most other tissues.

It is found in the membrane. In terms of biological role, regulates G protein-coupled receptor signaling cascades. Inhibits signal transduction by increasing the GTPase activity of G protein alpha subunits, thereby driving them into their inactive GDP-bound form. Plays an important role in the phototransduction cascade by regulating the lifetime and effective concentration of activated transducin alpha. May regulate extra and intracellular mitogenic signals. The polypeptide is Regulator of G-protein signaling 16 (RGS16) (Homo sapiens (Human)).